The sequence spans 293 residues: tRNA-cytidine(32) 2-sulfurtransferase (293 aa).

The PP-loop motif signature appears at 62–67; sequence SGGKDS. Cys137, Cys140, and Cys228 together coordinate [4Fe-4S] cluster.

It belongs to the TtcA family. In terms of assembly, homodimer. Requires Mg(2+) as cofactor. It depends on [4Fe-4S] cluster as a cofactor.

The protein localises to the cytoplasm. It carries out the reaction cytidine(32) in tRNA + S-sulfanyl-L-cysteinyl-[cysteine desulfurase] + AH2 + ATP = 2-thiocytidine(32) in tRNA + L-cysteinyl-[cysteine desulfurase] + A + AMP + diphosphate + H(+). Its pathway is tRNA modification. Its function is as follows. Catalyzes the ATP-dependent 2-thiolation of cytidine in position 32 of tRNA, to form 2-thiocytidine (s(2)C32). The sulfur atoms are provided by the cysteine/cysteine desulfurase (IscS) system. This is tRNA-cytidine(32) 2-sulfurtransferase from Brucella abortus (strain S19).